Reading from the N-terminus, the 84-residue chain is Double gene block protein 2 (84 aa).

Over 1-4 (MPSA) the chain is Lumenal. The chain crosses the membrane as a helical span at residues 5–25 (NLHPIVLTGVIGLMLLIRLRC). The Cytoplasmic portion of the chain corresponds to 26-30 (TFTST). Residues 31 to 51 (FSLPPLVTLNQIIALSFCGLL) form a helical membrane-spanning segment. The Lumenal portion of the chain corresponds to 52 to 84 (LNSISRAERACYYNYSVDSSKQQHISISTPNGK).

It belongs to the carmovirus double gene block protein 2 family.

The protein localises to the host endoplasmic reticulum membrane. Cell-to-cell movement function. This is Double gene block protein 2 from Carnation mottle virus (isolate China/Shanghai) (CarMV).